Consider the following 195-residue polypeptide: Mannitol operon repressor (195 aa).

The protein belongs to the MtlR/FumE family. In terms of assembly, homodimer. Can also form higher level multimer aggregates.

Involved in the repression of the expression of the mannitol mtlADR operon. Does not bind the operator/promoter regulatory region of this operon. Therefore, seems to belong to a new class of transcription factors in bacteria that may regulate gene expression indirectly, perhaps as a part of a larger transcriptional complex. The sequence is that of Mannitol operon repressor from Escherichia coli O6:H1 (strain CFT073 / ATCC 700928 / UPEC).